Reading from the N-terminus, the 619-residue chain is tRNA (guanine(37)-N(1))-methyltransferase 2 (619 aa).

The N-terminal 10 residues, 1–10 (MVSKLSLFRA), are a transit peptide targeting the mitochondrion. S-adenosyl-L-methionine is bound by residues Arg-434, 472 to 473 (DL), 500 to 501 (DG), and Asn-523.

Belongs to the class I-like SAM-binding methyltransferase superfamily. TRM5/TYW2 family. In terms of assembly, monomer.

It is found in the mitochondrion matrix. The protein localises to the nucleus. Its subcellular location is the cytoplasm. The enzyme catalyses guanosine(37) in tRNA + S-adenosyl-L-methionine = N(1)-methylguanosine(37) in tRNA + S-adenosyl-L-homocysteine + H(+). In terms of biological role, specifically methylates the N1 position of guanosine-37 in various cytoplasmic and mitochondrial tRNAs. Methylation is not dependent on the nature of the nucleoside 5' of the target nucleoside. This is the first step in the biosynthesis of wybutosine (yW), a modified base adjacent to the anticodon of tRNAs and required for accurate decoding. This Arabidopsis thaliana (Mouse-ear cress) protein is tRNA (guanine(37)-N(1))-methyltransferase 2.